Here is a 291-residue protein sequence, read N- to C-terminus: MAIQLPGFTMKNPLMPASGTFGFGEGYAKEYDLNLLGALVTKSTTLAPRIGNQGTIFADGPDSTLNAVGLKNPGSDVVLHEKLPWLATQYPDLPIIASIAGVDVAEYAAVAKKLSAAPNVKALEVNISCPNVKQGGMAFGTDPEVAAAVTRAVKAASSVPIFVKLTPNVTDITAIAKAVEQAGADGLSLINTFVGMRLDIATGKPLLDNVTGGVSGPALLPMALHMVYQVAHAVRVPLIGMGGISSGHDAAEMLAAGATALAVGSANYYQKRAIPKIAAELAAIQEGQTVL.

FMN contacts are provided by residues Ser-18 and 42 to 43 (KS). Substrate-binding positions include Lys-42, 66-70 (NAVGL), and Asn-126. Asn-126 contributes to the FMN binding site. Residue Cys-129 is the Nucleophile of the active site. FMN-binding residues include Lys-164 and Ile-190. 191–192 (NT) lines the substrate pocket. FMN contacts are provided by residues Gly-216, 242-243 (GG), and 264-265 (GS).

The protein belongs to the dihydroorotate dehydrogenase family. Type 1 subfamily. In terms of assembly, homodimer. Requires FMN as cofactor.

It localises to the cytoplasm. It catalyses the reaction (S)-dihydroorotate + fumarate = orotate + succinate. Its pathway is pyrimidine metabolism; UMP biosynthesis via de novo pathway. Functionally, catalyzes the conversion of dihydroorotate to orotate with fumarate as the electron acceptor. This chain is Dihydroorotate dehydrogenase A (fumarate) (pyrD), found in Lacticaseibacillus paracasei (strain ATCC 334 / BCRC 17002 / CCUG 31169 / CIP 107868 / KCTC 3260 / NRRL B-441) (Lactobacillus paracasei).